Here is a 404-residue protein sequence, read N- to C-terminus: Cysteine desulfurase IscS (404 aa).

Pyridoxal 5'-phosphate-binding positions include 85-86 (GT), Asn-165, Gln-193, 213-215 (SGH), and Thr-251. Catalysis depends on Cys-338, which acts as the Cysteine persulfide intermediate. Cys-338 serves as a coordination point for [2Fe-2S] cluster.

This sequence belongs to the class-V pyridoxal-phosphate-dependent aminotransferase family. NifS/IscS subfamily. As to quaternary structure, homodimer. Forms a heterotetramer with IscU, interacts with other sulfur acceptors. Requires pyridoxal 5'-phosphate as cofactor.

The protein localises to the cytoplasm. It catalyses the reaction (sulfur carrier)-H + L-cysteine = (sulfur carrier)-SH + L-alanine. It functions in the pathway cofactor biosynthesis; iron-sulfur cluster biosynthesis. In terms of biological role, master enzyme that delivers sulfur to a number of partners involved in Fe-S cluster assembly, tRNA modification or cofactor biosynthesis. Catalyzes the removal of elemental sulfur atoms from cysteine to produce alanine. Functions as a sulfur delivery protein for Fe-S cluster synthesis onto IscU, an Fe-S scaffold assembly protein, as well as other S acceptor proteins. This chain is Cysteine desulfurase IscS, found in Methanosarcina thermophila.